Reading from the N-terminus, the 199-residue chain is MNKLANGPNYKVKPRRRREGKTNYYKRYVYVISKQTRFIVRITNKYVIVQIAKIDPKGDIMIASAHSAELAKKFGWKGDENNTPAAYLTGYLAGLRAIKRGVTECVADIGLHVPSKGNRVFYVIKGAIDAGLKIPIGDISIENDRIKGEHIAKYAEKLKSENSDLYSKLFSRYLQRGLNPENLPSHFEEILNKIKSSGG.

This sequence belongs to the universal ribosomal protein uL18 family. Part of the 50S ribosomal subunit. Contacts the 5S and 23S rRNAs.

In terms of biological role, this is one of the proteins that bind and probably mediate the attachment of the 5S RNA into the large ribosomal subunit, where it forms part of the central protuberance. The chain is Large ribosomal subunit protein uL18 from Saccharolobus solfataricus (strain ATCC 35092 / DSM 1617 / JCM 11322 / P2) (Sulfolobus solfataricus).